The primary structure comprises 321 residues: Lipoyl synthase (321 aa).

7 residues coordinate [4Fe-4S] cluster: C68, C73, C79, C94, C98, C101, and S308. A Radical SAM core domain is found at 80–297; that stretch reads FNHGTATFMI…KAEAMAMGFT (218 aa).

This sequence belongs to the radical SAM superfamily. Lipoyl synthase family. The cofactor is [4Fe-4S] cluster.

It localises to the cytoplasm. The enzyme catalyses [[Fe-S] cluster scaffold protein carrying a second [4Fe-4S](2+) cluster] + N(6)-octanoyl-L-lysyl-[protein] + 2 oxidized [2Fe-2S]-[ferredoxin] + 2 S-adenosyl-L-methionine + 4 H(+) = [[Fe-S] cluster scaffold protein] + N(6)-[(R)-dihydrolipoyl]-L-lysyl-[protein] + 4 Fe(3+) + 2 hydrogen sulfide + 2 5'-deoxyadenosine + 2 L-methionine + 2 reduced [2Fe-2S]-[ferredoxin]. It participates in protein modification; protein lipoylation via endogenous pathway; protein N(6)-(lipoyl)lysine from octanoyl-[acyl-carrier-protein]: step 2/2. Its function is as follows. Catalyzes the radical-mediated insertion of two sulfur atoms into the C-6 and C-8 positions of the octanoyl moiety bound to the lipoyl domains of lipoate-dependent enzymes, thereby converting the octanoylated domains into lipoylated derivatives. The chain is Lipoyl synthase from Klebsiella pneumoniae (strain 342).